Here is a 365-residue protein sequence, read N- to C-terminus: Aminomethyltransferase (365 aa).

This sequence belongs to the GcvT family. The glycine cleavage system is composed of four proteins: P, T, L and H.

The catalysed reaction is N(6)-[(R)-S(8)-aminomethyldihydrolipoyl]-L-lysyl-[protein] + (6S)-5,6,7,8-tetrahydrofolate = N(6)-[(R)-dihydrolipoyl]-L-lysyl-[protein] + (6R)-5,10-methylene-5,6,7,8-tetrahydrofolate + NH4(+). Its function is as follows. The glycine cleavage system catalyzes the degradation of glycine. This chain is Aminomethyltransferase, found in Halalkalibacterium halodurans (strain ATCC BAA-125 / DSM 18197 / FERM 7344 / JCM 9153 / C-125) (Bacillus halodurans).